Here is a 125-residue protein sequence, read N- to C-terminus: MARIAGIDLPNNKQLQIALTSIYGIGRARALEICEKTGVLPDKRAKELDNDEVNKLRKIIESDYVVEGKLRSELAMSIKRLMDIACYRGLRHRKGLPLRGQRTKTNARTRKGKRKTVANKKMASK.

The segment at 97 to 125 (PLRGQRTKTNARTRKGKRKTVANKKMASK) is disordered.

Belongs to the universal ribosomal protein uS13 family. In terms of assembly, part of the 30S ribosomal subunit. Forms a loose heterodimer with protein S19. Forms two bridges to the 50S subunit in the 70S ribosome.

Located at the top of the head of the 30S subunit, it contacts several helices of the 16S rRNA. In the 70S ribosome it contacts the 23S rRNA (bridge B1a) and protein L5 of the 50S subunit (bridge B1b), connecting the 2 subunits; these bridges are implicated in subunit movement. Contacts the tRNAs in the A and P-sites. This Borrelia hermsii (strain HS1 / DAH) protein is Small ribosomal subunit protein uS13.